The primary structure comprises 428 residues: Glutamine synthetase leaf isozyme, chloroplastic (428 aa).

The transit peptide at 1-49 directs the protein to the chloroplast; it reads MAQILAPSIQCQTRITKTSPLATPISSKMWSSLVMKQNKKVARSAKFRV. One can recognise a GS beta-grasp domain in the interval 75-155; that stretch reads IIAEYIWIGG…VICDAYTPQG (81 aa). Residues 159–428 enclose the GS catalytic domain; it reads PTNKRHKAAE…LAAQKIALKV (270 aa).

It belongs to the glutamine synthetase family. Homooctamer.

The protein localises to the plastid. The protein resides in the chloroplast. It catalyses the reaction L-glutamate + NH4(+) + ATP = L-glutamine + ADP + phosphate + H(+). Functionally, the light-modulated chloroplast enzyme, encoded by a nuclear gene and expressed primarily in leaves, is responsible for the reassimilation of the ammonia generated by photorespiration. The protein is Glutamine synthetase leaf isozyme, chloroplastic (GS2) of Medicago sativa (Alfalfa).